Here is a 521-residue protein sequence, read N- to C-terminus: Glucose-1-phosphate adenylyltransferase large subunit 2, chloroplastic/amyloplastic (521 aa).

A chloroplast-targeting transit peptide spans 1–47 (MQFSSVLPLEGKACMSPVRRGSGGYGSERMRINCCSIRRNKALRRMC).

Belongs to the bacterial/plant glucose-1-phosphate adenylyltransferase family. Heterotetramer. As to expression, abundant in the embryo and is also present in the endosperm.

It localises to the plastid. The protein localises to the chloroplast. Its subcellular location is the amyloplast. The enzyme catalyses alpha-D-glucose 1-phosphate + ATP + H(+) = ADP-alpha-D-glucose + diphosphate. It functions in the pathway glycan biosynthesis; starch biosynthesis. Its activity is regulated as follows. Activated by 3'phosphoglycerate, inhibited by orthophosphate. Allosteric regulation. Functionally, this protein plays a role in synthesis of starch. It catalyzes the synthesis of the activated glycosyl donor, ADP-glucose from Glc-1-P and ATP. The polypeptide is Glucose-1-phosphate adenylyltransferase large subunit 2, chloroplastic/amyloplastic (AGP2) (Zea mays (Maize)).